A 63-amino-acid polypeptide reads, in one-letter code: Large ribosomal subunit protein bL28c (63 aa).

This sequence belongs to the bacterial ribosomal protein bL28 family.

The protein resides in the plastid. The protein localises to the chloroplast. The sequence is that of Large ribosomal subunit protein bL28c (rpl28) from Porphyra purpurea (Red seaweed).